We begin with the raw amino-acid sequence, 89 residues long: Small ribosomal subunit protein uS15 (89 aa).

This sequence belongs to the universal ribosomal protein uS15 family. In terms of assembly, part of the 30S ribosomal subunit. Forms a bridge to the 50S subunit in the 70S ribosome, contacting the 23S rRNA.

Its function is as follows. One of the primary rRNA binding proteins, it binds directly to 16S rRNA where it helps nucleate assembly of the platform of the 30S subunit by binding and bridging several RNA helices of the 16S rRNA. In terms of biological role, forms an intersubunit bridge (bridge B4) with the 23S rRNA of the 50S subunit in the ribosome. This is Small ribosomal subunit protein uS15 from Chlamydia caviae (strain ATCC VR-813 / DSM 19441 / 03DC25 / GPIC) (Chlamydophila caviae).